Here is a 190-residue protein sequence, read N- to C-terminus: Secreted isochorismatase effector Isc1 (190 aa).

Active-site residues include aspartate 26, lysine 100, and cysteine 133.

It belongs to the isochorismatase family.

It localises to the secreted. The protein localises to the host cytoplasm. Its subcellular location is the host nucleus. It carries out the reaction isochorismate + H2O = (2S,3S)-2,3-dihydroxy-2,3-dihydrobenzoate + pyruvate. Its function is as follows. Secreted isochorismatase required for full virulence of V.dahliae. Suppresses salicylate-mediated innate immunity of the host by disrupting the plant salicylate metabolism pathway via hydrolysis of its isochorismate precursor. This Verticillium dahliae (strain VdLs.17 / ATCC MYA-4575 / FGSC 10137) (Verticillium wilt) protein is Secreted isochorismatase effector Isc1.